We begin with the raw amino-acid sequence, 1038 residues long: Protein argonaute 1D (1038 aa).

2 disordered regions span residues 1–58 and 110–134; these read MGSR…GAAP and APHE…PRSL. Gly residues-rich tracts occupy residues 18 to 29 and 43 to 52; these read RGGGRGGGGRGR and GHGGRGGAGY. A compositionally biased stretch (low complexity) spans 115 to 134; that stretch reads PANVSSPEAASPEASSPRSL. A PAZ domain is found at 380 to 493; that stretch reads PVIDFVIQLL…LPMEVCKIVE (114 aa). In terms of domain architecture, Piwi spans 669–990; it reads LLIGLLPDNN…AAFRARFYME (322 aa). Positions 992-1021 are disordered; that stretch reads DSSDSGSMASGRGGGSSTSRSTRAAGGGAV.

It belongs to the argonaute family. Ago subfamily.

Functionally, probably involved in the RNA silencing pathway. May bind to short RNAs such as microRNAs (miRNAs) or short interfering RNAs (siRNAs), and represses the translation of mRNAs which are complementary to them. In Oryza sativa subsp. japonica (Rice), this protein is Protein argonaute 1D (AGO1D).